We begin with the raw amino-acid sequence, 764 residues long: Probable 5-methyltetrahydropteroyltriglutamate--homocysteine methyltransferase (764 aa).

K19 and N126 together coordinate 5-methyltetrahydropteroyltri-L-glutamate. The residue at position 182 (S182) is a Phosphoserine. Residue T441 is modified to Phosphothreonine. Residues 442–444 and E495 contribute to the L-homocysteine site; that span reads IGS. L-methionine-binding positions include 442-444 and E495; that span reads IGS. 5-methyltetrahydropteroyltri-L-glutamate is bound by residues D500, Y523, 526–527, and W572; that span reads RC. D610 contacts L-homocysteine. D610 lines the L-methionine pocket. Zn(2+) contacts are provided by H652, C654, and E676. Catalysis depends on H703, which acts as the Proton donor. A Zn(2+)-binding site is contributed by C735.

It belongs to the vitamin-B12 independent methionine synthase family. Zn(2+) serves as cofactor.

Its subcellular location is the nucleus. It localises to the cytoplasm. The catalysed reaction is 5-methyltetrahydropteroyltri-L-glutamate + L-homocysteine = tetrahydropteroyltri-L-glutamate + L-methionine. Its pathway is amino-acid biosynthesis; L-methionine biosynthesis via de novo pathway; L-methionine from L-homocysteine (MetE route): step 1/1. Its function is as follows. Catalyzes the transfer of a methyl group from 5-methyltetrahydrofolate to homocysteine resulting in methionine formation. This chain is Probable 5-methyltetrahydropteroyltriglutamate--homocysteine methyltransferase (met26), found in Schizosaccharomyces pombe (strain 972 / ATCC 24843) (Fission yeast).